Consider the following 161-residue polypeptide: Cytidylate kinase (161 aa).

7 to 15 is an ATP binding site; that stretch reads GLAGTGTTT.

This sequence belongs to the cytidylate kinase family. Type 2 subfamily.

The protein localises to the cytoplasm. The enzyme catalyses CMP + ATP = CDP + ADP. It carries out the reaction dCMP + ATP = dCDP + ADP. The sequence is that of Cytidylate kinase (cmk) from Methanothermobacter thermautotrophicus (strain ATCC 29096 / DSM 1053 / JCM 10044 / NBRC 100330 / Delta H) (Methanobacterium thermoautotrophicum).